We begin with the raw amino-acid sequence, 258 residues long: Regulatory protein RecX (258 aa).

This sequence belongs to the RecX family.

It localises to the cytoplasm. In terms of biological role, modulates RecA activity. This chain is Regulatory protein RecX, found in Streptococcus gordonii (strain Challis / ATCC 35105 / BCRC 15272 / CH1 / DL1 / V288).